Here is a 117-residue protein sequence, read N- to C-terminus: MIAKPIYMQGEGDGEDGGTNRGTSVITRVKPKTKRPNLYRVLLLNDDYTPMEFVIHILERFFQKDREAATRIMLHVHQHGVGECGVFTYEVAETKVSQVMDFARQHQHPLQCVMEKK.

The protein belongs to the ClpS family. Binds to the N-terminal domain of the chaperone ClpA.

Functionally, involved in the modulation of the specificity of the ClpAP-mediated ATP-dependent protein degradation. The polypeptide is ATP-dependent Clp protease adapter protein ClpS 1 (Agrobacterium fabrum (strain C58 / ATCC 33970) (Agrobacterium tumefaciens (strain C58))).